The sequence spans 130 residues: Small ribosomal subunit protein uS9 (130 aa).

This sequence belongs to the universal ribosomal protein uS9 family.

In Aromatoleum aromaticum (strain DSM 19018 / LMG 30748 / EbN1) (Azoarcus sp. (strain EbN1)), this protein is Small ribosomal subunit protein uS9.